The sequence spans 216 residues: Thymidylate kinase (216 aa).

10–17 serves as a coordination point for ATP; sequence GIDGCGKT.

This sequence belongs to the thymidylate kinase family.

It carries out the reaction dTMP + ATP = dTDP + ADP. Its function is as follows. Phosphorylation of dTMP to form dTDP in both de novo and salvage pathways of dTTP synthesis. In Prochlorococcus marinus (strain MIT 9303), this protein is Thymidylate kinase.